The chain runs to 306 residues: Mitochondrial brown fat uncoupling protein 1 (306 aa).

Topologically, residues 1 to 10 are mitochondrial intermembrane; it reads MVGTTATDVA. The helical transmembrane segment at 11 to 32 threads the bilayer; sequence PTMGVKIFSAGVAACLADVITF. Solcar repeat units lie at residues 11-102, 110-200, and 209-294; these read PTMG…VQEF, PSLR…MKGA, and DDVP…LKRE. Residues 33 to 73 lie on the Mitochondrial matrix side of the membrane; that stretch reads PLDTAKVRLQIQGECQTTSGIRYKGVLGTITTLAKTEGPLK. Fatty acid 16:0 is bound at residue lysine 56. The chain crosses the membrane as a helical span at residues 74–96; it reads LYSGLPAGLQRQISFASLRIGLY. Topologically, residues 97–115 are mitochondrial intermembrane; the sequence is DTVQEFWGGEEATPSLRSK. A helical membrane pass occupies residues 116–132; that stretch reads ICAGLTTGGVAVFIGQP. Residues 133-177 lie on the Mitochondrial matrix side of the membrane; sequence TEVVKVRLQAQSHLHGLKPRYTGTYNAYRIIATTESLSTLWKGTT. Residues 178–194 form a helical membrane-spanning segment; the sequence is PNLLRNIIINCTELVTY. Residues 195 to 211 are Mitochondrial intermembrane-facing; that stretch reads DLMKGALVRNDILADDV. A helical membrane pass occupies residues 212-231; sequence PCHLLSALIAGFCTTLLSSP. Residues 232 to 265 lie on the Mitochondrial matrix side of the membrane; that stretch reads VDVVKTRFINSPQGQYTSVPSCAMSMLTKEGPTA. The residue at position 253 (cysteine 253) is a Cysteine sulfenic acid (-SOH). A helical membrane pass occupies residues 266–288; that stretch reads FFKGFAPSFLRLASWNVIMFVCF. Lysine 268 is a fatty acid 16:0 binding site. The Mitochondrial intermembrane portion of the chain corresponds to 289-306; that stretch reads EKLKRELMKSRQTVDCAT.

Belongs to the mitochondrial carrier (TC 2.A.29) family. Most probably functions as a monomer. Binds one purine nucleotide per monomer. However, has also been suggested to function as a homodimer or a homotetramer. Tightly associates with cardiolipin in the mitochondrion inner membrane; may stabilize and regulate its activity. Post-translationally, may undergo sulfenylation upon cold exposure. May increase the sensitivity of UCP1 thermogenic function to the activation by noradrenaline probably through structural effects. In terms of processing, may undergo ubiquitin-mediated proteasomal degradation.

It localises to the mitochondrion inner membrane. The catalysed reaction is H(+)(in) = H(+)(out). With respect to regulation, has no constitutive proton transporter activity and has to be activated by long-chain fatty acids/LCFAs. Inhibited by purine nucleotides. Both purine nucleotides and LCFAs bind the cytosolic side of the transporter and directly compete to activate or inhibit it. Activated by noradrenaline and reactive oxygen species. Despite lacking canonical translational encoding for selenocysteine, a small pool of the protein has been observed to selectively incorporate selenocysteine at 'Cys-253'. Selenocysteine-modified protein is highly sensitive to redox modification and may constitute a pool of protein highly sensitive to activation by elevated levels of reactive oxygen species (ROS). Functionally, mitochondrial protein responsible for thermogenic respiration, a specialized capacity of brown adipose tissue and beige fat that participates in non-shivering adaptive thermogenesis to temperature and diet variations and more generally to the regulation of energy balance. Functions as a long-chain fatty acid/LCFA and proton symporter, simultaneously transporting one LCFA and one proton through the inner mitochondrial membrane. However, LCFAs remaining associated with the transporter via their hydrophobic tails, it results in an apparent transport of protons activated by LCFAs. Thereby, dissipates the mitochondrial proton gradient and converts the energy of substrate oxydation into heat instead of ATP. Regulates the production of reactive oxygen species/ROS by mitochondria. In Ochotona dauurica (Daurian pika), this protein is Mitochondrial brown fat uncoupling protein 1.